The following is a 260-amino-acid chain: Adenosylcobinamide-GDP ribazoletransferase (260 aa).

6 helical membrane-spanning segments follow: residues Ala40–Leu60, Ala64–Leu84, Tyr117–Val137, Pro142–Trp162, Phe189–Trp209, and Pro210–Arg230.

It belongs to the CobS family. The cofactor is Mg(2+).

It localises to the cell inner membrane. The enzyme catalyses alpha-ribazole + adenosylcob(III)inamide-GDP = adenosylcob(III)alamin + GMP + H(+). It carries out the reaction alpha-ribazole 5'-phosphate + adenosylcob(III)inamide-GDP = adenosylcob(III)alamin 5'-phosphate + GMP + H(+). It functions in the pathway cofactor biosynthesis; adenosylcobalamin biosynthesis; adenosylcobalamin from cob(II)yrinate a,c-diamide: step 7/7. In terms of biological role, joins adenosylcobinamide-GDP and alpha-ribazole to generate adenosylcobalamin (Ado-cobalamin). Also synthesizes adenosylcobalamin 5'-phosphate from adenosylcobinamide-GDP and alpha-ribazole 5'-phosphate. The sequence is that of Adenosylcobinamide-GDP ribazoletransferase from Rhizobium etli (strain CIAT 652).